The chain runs to 6631 residues: MASSLKQGVSPKLRDVILVSKDIPEQLCDALFFYTSHNPKDYADAFAVRQKFDRNLQTGKQFKFETVCGLFLLKGVDKITPGVPAKVLKATSKLADLEDIFGVSPFARKYRELLKTACQWSLTVETLDARAQTLDEIFDPTEILWLQVAAKIQVSAMAMRRLVGEVTAKVMDALGSNMSALFQIFKQQIVRIFQKALAIFENVSELPQRIAALKMAFAKCAKSITVVVMERTLVVREFAGTCLASINGAVAKFFEELPNGFMGAKIFTTLAFFREAAVKIVDNIPNAPRGTKGFEVVGNAKGTQVVVRGMRNDLTLLDQKAEIPVESEGWSAILGGHLCYVFKSGDRFYAAPLSGNFALHDVHCCERVVCLSDGVTPEINDGLILAAIYSSFSVAELVAAIKRGEPFKFLGHKFVYAKDAAVSFTLAKAATIADVLKLFQSARVKVEDVWSSLTEKSFEFWRLAYGKVRNLEEFVKTCFCKAQMAIVILATVLGEGIWHLVSQVIYKVGGLFTKVVDFCEKYWKGFCAQLKRAKLIVTETLCVLKGVAQHCFQLLLDAIQFMYKSFKKCALGRIHGDLLFWKGGVHKIIQEGDEIWFDAIDSIDVEDLGVVQEKLIDFDVCDNVTLPENQPGHMVQIEDDGKNYMFFRFKKDENIYYTPMSQLGAINVVCKAGGKTVTFGETTVQEIPPPDVVFIKVSIECCGEPWNTIFKKAYKEPIEVETDLTVEQLLSVVYEKMCDDLKLFPEAPEPPPFENVTLVDKNGKDLDCIKSCHLIYRDYESDDDIEEEDAEECDTDSGDAEECDTNLECEEEDEDTKVLALIQDPASNKYPLPLDDDYSVYNGCIVHKDALDVVNLPSGEETFVVNNCFEGAVKALPQKVIDVLGDWGEAVDAQEQLCQQESTRVISEKSVEGFTGSCDAMAEQAIVEEQEIVPVVEQSQDVVVFTPADLEVVKETAEEVDEFILISAVPKEEVVSQEKEEPQVEQEPTLVVKAQREKKAKKFKVKPATCEKPKFLEYKTCVGDLAVVIAKALDEFKEFCIVNAANEHMSHGGGVAKAIADFCGPDFVEYCADYVKKHGPQQKLVTPSFVKGIQCVNNVVGPRHGDSNLREKLVAAYKSVLVGGVVNYVVPVLSSGIFGVDFKISIDAMREAFKGCAIRVLLFSLSQEHIDYFDATCKQKTIYLTEDGVKYRSVVLKPGDSLGQFGQVFARNKVVFSADDVEDKEILFIPTTDKTILEYYGLDAQKYVTYLQTLAQKWDVQYRDNFVILEWRDGNCWISSAIVLLQAAKIRFKGFLAEAWAKLLGGDPTDFVAWCYASCNAKVGDFSDANWLLANLAEHFDADYTNALLKKCVSCNCGVKSYELRGLEACIQPVRAPNLLHFKTQYSNCPTCGASSTDEVIEASLPYLLLFATDGPATVDCDENAVGTVVFIGSTNSGHCYTQADGKAFDNLAKDRKFGRKSPYITAMYTRFSLRSENPLLVVEHSKGKAKVVKEDVSNLATSSKASFDDLTDFEQWYDSNIYESLKVQETPDNLDEYVSFTTKEDSKLPLTLKVRGIKSVVDFRSKDGFTYKLTPDTDENSKTPVYYPVLDSISLRAIWVEGSANFVVGHPNYYSKSLRIPTFWENAESFVKMGYKIDGVTMGLWRAEHLNKPNLERIFNIAKKAIVGSSVVTTQCGKILVKAATYVADKVGDGVVRNITDRIKGLCGFTRGHFEKKMSLQFLKTLVFFFFYFLKASSKSLVSSYKIVLCKVVFATLLIVWFIYTSNPVVFTGIRVLDFLFEGSLCGPYNDYGKDSFDVLRYCAGDFTCRVCLHDRDSLHLYKHAYSVEQIYKDAASGINFNWNWLYLVFLILFVKPVAGFVIICYCVKYLVLSSTVLQTGVGFLDWFVKTVFTHFNFMGAGFYFWLFYKIYVQVHHILYCKDVTCEVCKRVARSNRQEVSVVVGGRKQIVHVYTNSGYNFCKRHNWYCRNCDDYGHQNTFMSPEVAGELSEKLKRHVKPTAYAYHVVYEACVVDDFVNLKYKAAIPGKDNASSAVKCFSVTDFLKKAVFLKEALKCEQISNDGFIVCNTQSAHALEEAKNAAVYYAQYLCKPILILDQALYEQLIVEPVSKSVIDKVCSILSNIISVDTAALNYKAGTLRDALLSITKDEEAVDMAIFCHNHEVEYTGDGFTNVIPSYGMDTDKLTPRDRGFLINADASIANLRVKNAPPVVWKFSDLIKLSDSCLKYLISATVKSGGRFFITKSGAKQVISCHTQKLLVEKKAGGVINNTFKWFMSCFKWLFVFYILFTACCLGYYYMEMNKSFVHPMYDVNSTLHVEGFKVIDKGVIREIVSEDNCFSNKFVNFDAFWGKSYENNKNCPIVTVVIDGDGTVAVGVPGFVSWVMDGVMFVHMTQTDRRPWYIPTWFNREIVGYTQDSIITEGSFYTSIALFSARCLYLTASNTPQLYCFNGDNDAPGALPFGSIIPHRVYFQPNGVRLIVPQQILHTPYIVKFVSDSYCRGSVCEYTKPGYCVSLDSQWVLFNDEYISKPGVFCGSTVRELMFNMVSTFFTGVNPNIYIQLATMFLILVVIVLIFAMVIKFQGVFKAYATIVFTIMLVWVINAFVLCVHSYNSVLAVILLVLYCYASMVTSRNTAIIMHCWLVFTFGLIVPTWLACCYLGFILYMYTPLVFWCYGTTKNTRKLYDGNEFVGNYDLAAKSTFVIRGTEFVKLTNEIGDKFEAYLSAYARLKYYSGTGSEQDYLQACRAWLAYALDQYRNSGVEVVYTPPRYSIGVSRLQAGFKKLVSPSSAVEKCIVSVSYRGNNLNGLWLGDSIYCPRHVLGKFSGDQWGDVLNLANNHEFEVVTQNGVTLNVVSRRLKGAVLILQTAVANAETPKYKFVKANCGDSFTIACSYGGTVIGLYPVTMRSNGTIRASFLAGACGSVGFNIEKGVVNFFYMHHLELPNALHTGTDLMGEFYGGYVDEEVAQRVPPDNLVTNNIVAWLYAAIISVKESSFSQPKWLESTTVSIEDYNRWASDNGFTPFSTSTAITKLSAITGVDVCKLLRTIMVKSAQWGSDPILGQYNFEDELTPESVFNQVGGVRLQSSFVRKATSWFWSRCVLACFLFVLCAIVLFTAVPLKFYVHAAVILLMAVLFISFTVKHVMAYMDTFLLPTLITVIIGVCAEVPFIYNTLISQVVIFLSQWYDPVVFDTMVPWMLLPLVLYTAFKCVQGCYMNSFNTSLLMLYQFMKLGFVIYTSSNTLTAYTEGNWELFFELVHTIVLANVSSNSLIGLIVFKCAKWMLYYCNATYFNNYVLMAVMVNGIGWLCTCYFGLYWWVNKVFGLTLGKYNFKVSVDQYRYMCLHKVNPPKTVWEVFTTNILIQGIGGDRVLPIATVQSKLSDVKCTTVVLMQLLTKLNVEANSKMHAYLVELHNKILASDDVGECMDNLLGMLITLFCIDSTIDLGEYCDDILKRSTVLQSVTQEFSHIPSYAEYERAKSIYEKVLADSKNGGVTQQELAAYRKAANIAKSVFDRDLAVQKKLDSMAERAMTTMYKEARVTDRRAKLVSSLHALLFSMLKKIDSEKLNVLFDQANSGVVPLATVPIVCSNKLTLVIPDPETWVKCVEGVHVTYSTVVWNIDCVTDADGTELHPTSTGSGLTYCISGDNIAWPLKVNLTRNGHNKVDVALQNNELMPHGVKTKACVAGVDQAHCSVESKCYYTSISGSSVVAAITSSNPNLKVASFLNEAGNQIYVDLDPPCKFGMKVGDKVEVVYLYFIKNTRSIVRGMVLGAISNVVVLQSKGHETEEVDAVGILSLCSFAVDPADTYCKYVAAGNQPLGNCVKMLTVHNGSGFAITSKPSPTPDQDSYGGASVCLYCRAHIAHPGGAGNLDGRCQFKGSFVQIPTTEKDPVGFCLRNKVCTVCQCWIGYGCQCDSLRQPKPSVQSVAVASGFDKNYLNRVRGSSEARLIPLANGCDPDVVKRAFDVCNKESAGMFQNLKRNCARFQEVRDTEDGNLEYCDSYFVVKQTTPSNYEHEKACYEDLKSEVTADHDFFVFNKNIYNISRQRLTKYTMMDFCYALRHFDPKDCEVLKEILVTYGCIEDYHPKWFEENKDWYDPIENPKYYAMLAKMGPIVRRALLNAIEFGNLMVEKGYVGVITLDNQDLNGKFYDFGDFQKTAPGAGVPVFDTYYSYMMPIIAMTDALAPERYFEYDVHKGYKSYDLLKYDYTEEKQDLFQKYFKYWDQEYHPNCRDCSDDRCLIHCANFNILFSTLVPQTSFGNLCRKVFVDGVPFIATCGYHSKELGVIMNQDNTMSFSKMGLSQLMQFVGDPALLVGTSNKLVDLRTSCFSVCALASGITHQTVKPGHFNKDFYDFAEKAGMFKEGSSIPLKHFFYPQTGNAAINDYDYYRYNRPTMFDIRQLLFCLEVTSKYFECYEGGCIPASQVVVNNLDKSAGYPFNKFGKARLYYEMSLEEQDQLFESTKKNVLPTITQMNLKYAISAKNRARTVAGVSILSTMTNRQFHQKILKSIVNTRNAPVVIGTTKFYGGWDNMLRNLIQGVEDPILMGWDYPKCDRAMPNLLRIAASLVLARKHTNCCTWSERVYRLYNECAQVLSETVLATGGIYVKPGGTSSGDATTAYANSVFNIIQATSANVARLLSVITRDIVYDDIKSLQYELYQQVYRRVNFDPAFVEKFYSYLCKNFSLMILSDDGVVCYNNTLAKQGLVADISGFREVLYYQNNVFMADSKCWVEPDLEKGPHEFCSQHTMLVEVDGEPRYLPYPDPSRILCACVFVDDLDKTESVAVMERYIALAIDAYPLVHHENEEYKKVFFVLLSYIRKLYQELSQNMLMDYSFVMDIDKGSKFWEQEFYENMYRAPTTLQSCGVCVVCNSQTILRCGNCIRKPFLCCKCCYDHVMHTDHKNVLSINPYICSQPGCGEADVTKLYLGGMSYFCGNHKPKLSIPLVSNGTVFGIYRANCAGSENVDDFNQLATTNWSTVEPYILANRCVDSLRRFAAETVKATEELHKQQFASAEVREVLSDRELILSWEPGKTRPPLNRNYVFTGFHFTRTSKVQLGDFTFEKGEGKDVVYYRATSTAKLSVGDIFVLTSHNVVSLIAPTLCPQQTFSRFVNLRPNVMVPACFVNNIPLYHLVGKQKRTTVQGPPGSGKSHFAIGLAAYFSNARVVFTACSHAAVDALCEKAFKFLKVDDCTRIVPQRTTIDCFSKFKANDTGKKYIFSTINALPEVSCDILLVDEVSMLTNYELSFINGKINYQYVVYVGDPAQLPAPRTLLNGSLSPKDYNVVTNLMVCVKPDIFLAKCYRCPKEIVDTVSTLVYDGKFIANNPESRQCFKVIVNNGNSDVGHESGSAYNITQLEFVKDFVCRNKEWREATFISPYNAMNQRAYRMLGLNVQTVDSSQGSEYDYVIFCVTADSQHALNINRFNVALTRAKRGILVVMRQRDELYSALKFIELDSVASLQGTGLFKICNKEFSGVHPAYAVTTKALAATYKVNDELAALVNVEAGSEITYKHLISLLGFKMSVNVEGCHNMFITRDEAIRNVRGWVGFDVEATHACGTNIGTNLPFQVGFSTGADFVVTPEGLVDTSIGNNFEPVNSKAPPGEQFNHLRALFKSAKPWHVVRPRIVQMLADNLCNVSDCVVFVTWCHGLELTTLRYFVKIGKDQVCSCGSRATTFNSHTQAYACWKHCLGFDFVYNPLLVDIQQWGYSGNLQFNHDLHCNVHGHAHVASADAIMTRCLAINNAFCQDVNWDLTYPHIANEDEVNSSCRYLQRMYLNACVDALKVNVVYDIGNPKGIKCVRRGDLNFRFYDKNPIVPNVKQFEYDYNQHKDKFADGLCMFWNCNVDCYPDNSLVCRYDTRNLSVFNLPGCNGGSLYVNKHAFHTPKFDRTSFRNLKAMPFFFYDSSPCETIQLDGVAQDLVSLATKDCITKCNIGGAVCKKHAQMYADFVTSYNAAVTAGFTFWVTNNFNPYNLWKSFSALQSIDNIAYNMYKGGHYDAIAGEMPTIVTGDKVFVIDQGVEKAVFFNQTILPTSVAFELYAKRNIRTLPNNRILKGLGVDVTNGFVIWDYTNQTPLYRNTVKVCAYTDIEPNGLIVLYDDRYGDYQSFLAADNAVLVSTQCYKRYSYVEIPSNLLVQNGIPLKDGANLYVYKRVNGAFVTLPNTLNTQGRSYETFEPRSDVERDFLDMSEESFVEKYGKELGLQHILYGEVDKPQLGGLHTVIGMCRLLRANKLNAKSVTNSDSDVMQNYFVLADNGSYKQVCTVVDLLLDDFLELLRNILKEYGTNKSKVVTVSIDYHSINFMAWFEDGIIKTCYPQLQSAWTCGYNMPELYKVQNCVMEPCNIPNYGVGIALPSGIMMNVAKYTQLCQYLSKTTMCVPHNMRVMHFGAGSDKGVAPGSTVLKQWLPEGTLLVDNDIVDYVSDAHVSVLSDCNKYKTEHKFDLVISDMYTDNDSKRKHEGVIANNGNDDVFIYLSSFLRNNLALGGSFAVKVTETSWHEVLYDIAQDCAWWTMFCTAVNASSSEAFLVGVNYLGASEKVKVSGKTLHANYIFWRNCNYLQTSAYSIFDVAKFDLRLKATPVVNLKTEQKTDLVFNLIKCGKLLVRDVGNTSFTSDSFVCTM.

The Cytoplasmic portion of the chain corresponds to 1 to 1752 (MASSLKQGVS…VSSYKIVLCK (1752 aa)). 2 consecutive Ubiquitin-like domains span residues 675 to 780 (KTVT…RDYE) and 1177 to 1229 (CKQK…ILFI). Positions 1005 to 1181 (VKPATCEKPK…YFDATCKQKT (177 aa)) constitute a Macro domain. The 262-residue stretch at 1238 to 1499 (EYYGLDAQKY…AKVVKEDVSN (262 aa)) folds into the Peptidase C16 domain. C1276 serves as the catalytic For PL-PRO activity. Residues 1355 to 1392 (CNCGVKSYELRGLEACIQPVRAPNLLHFKTQYSNCPTC) form a C4-type; degenerate zinc finger. Active-site for PL-PRO activity residues include H1439 and D1450. A helical transmembrane segment spans residues 1753-1773 (VVFATLLIVWFIYTSNPVVFT). The segment at 1753 to 1866 (VVFATLLIVW…KPVAGFVIIC (114 aa)) is HD1. A 3Ecto domain is found at 1771 to 1835 (VFTGIRVLDF…AYSVEQIYKD (65 aa)). Residues 1774–1845 (GIRVLDFLFE…AASGINFNWN (72 aa)) lie on the Lumenal side of the membrane. Intrachain disulfides connect C1787–C1813 and C1804–C1810. A helical transmembrane segment spans residues 1846 to 1866 (WLYLVFLILFVKPVAGFVIIC). At 1867 to 2282 (YCVKYLVLSS…TFKWFMSCFK (416 aa)) the chain is on the cytoplasmic side. Positions 1913 to 2003 (YVQVHHILYC…KLKRHVKPTA (91 aa)) are Y1. One can recognise a CoV Nsp3 Y domain in the interval 1913 to 2265 (YVQVHHILYC…HTQKLLVEKK (353 aa)). Zn(2+) is bound by residues H1917, C1922, C1927, C1930, C1963, H1966, C1970, and C1973. Positions 1917 to 1930 (HHILYCKDVTCEVC) are ZF1. Residues 1963 to 1973 (CKRHNWYCRNC) are ZF2. Residues 2004 to 2106 (YAYHVVYEAC…ILDQALYEQL (103 aa)) are Y2. A coV-Y region spans residues 2004–2265 (YAYHVVYEAC…HTQKLLVEKK (262 aa)). Residues 2107-2165 (IVEPVSKSVIDKVCSILSNIISVDTAALNYKAGTLRDALLSITKDEEAVDMAIFCHNHE) are Y3. A Y4 region spans residues 2166-2265 (VEYTGDGFTN…HTQKLLVEKK (100 aa)). Residues 2283-2303 (WLFVFYILFTACCLGYYYMEM) traverse the membrane as a helical segment. An HD2 region spans residues 2283–2666 (WLFVFYILFT…LACCYLGFIL (384 aa)). The Lumenal segment spans residues 2304–2561 (NKSFVHPMYD…FFTGVNPNIY (258 aa)). The chain crosses the membrane as a helical span at residues 2562–2582 (IQLATMFLILVVIVLIFAMVI). The Cytoplasmic segment spans residues 2583–2613 (KFQGVFKAYATIVFTIMLVWVINAFVLCVHS). The chain crosses the membrane as a helical span at residues 2614–2634 (YNSVLAVILLVLYCYASMVTS). Residues 2635–2645 (RNTAIIMHCWL) lie on the Lumenal side of the membrane. The chain crosses the membrane as a helical span at residues 2646–2666 (VFTFGLIVPTWLACCYLGFIL). Topologically, residues 2667 to 3098 (YMYTPLVFWC…SSFVRKATSW (432 aa)) are cytoplasmic. The 96-residue stretch at 2686–2781 (LYDGNEFVGN…RYSIGVSRLQ (96 aa)) folds into the Nsp4C domain. Residues 2782-3088 (AGFKKLVSPS…FNQVGGVRLQ (307 aa)) form the Peptidase C30 domain. Active-site for 3CL-PRO activity residues include H2822 and C2924. A helical membrane pass occupies residues 3099 to 3119 (FWSRCVLACFLFVLCAIVLFT). The interval 3099–3319 (FWSRCVLACF…WLCTCYFGLY (221 aa)) is HD3. The Lumenal segment spans residues 3120-3123 (AVPL). Residues 3124 to 3144 (KFYVHAAVILLMAVLFISFTV) traverse the membrane as a helical segment. At 3145–3153 (KHVMAYMDT) the chain is on the cytoplasmic side. The chain crosses the membrane as a helical span at residues 3154 to 3174 (FLLPTLITVIIGVCAEVPFIY). Over 3175–3190 (NTLISQVVIFLSQWYD) the chain is Lumenal. A helical membrane pass occupies residues 3191 to 3211 (PVVFDTMVPWMLLPLVLYTAF). Over 3212-3259 (KCVQGCYMNSFNTSLLMLYQFMKLGFVIYTSSNTLTAYTEGNWELFFE) the chain is Cytoplasmic. Residues 3260-3280 (LVHTIVLANVSSNSLIGLIVF) traverse the membrane as a helical segment. The Lumenal segment spans residues 3281–3298 (KCAKWMLYYCNATYFNNY). Residues 3299-3319 (VLMAVMVNGIGWLCTCYFGLY) form a helical membrane-spanning segment. The Cytoplasmic portion of the chain corresponds to 3320 to 6631 (WWVNKVFGLT…FTSDSFVCTM (3312 aa)). One can recognise a RdRp Nsp7 cofactor domain in the interval 3382–3464 (SKLSDVKCTT…DILKRSTVLQ (83 aa)). A RdRp Nsp8 cofactor domain is found at 3465–3674 (SVTQEFSHIP…GHNKVDVALQ (210 aa)). The Nsp9 ssRNA-binding domain occupies 3675-3785 (NNELMPHGVK…GAISNVVVLQ (111 aa)). An ExoN/MTase coactivator domain is found at 3787–3928 (KGHETEEVDA…CDSLRQPKPS (142 aa)). Residues C3860, C3863, H3869, C3880, C3906, C3909, C3917, and C3919 each contribute to the Zn(2+) site. Zinc fingers lie at residues 3860-3880 (CLYC…DGRC) and 3906-3919 (CTVC…GCQC). Residues 3942-4200 (YLNRVRGSSE…APERYFEYDV (259 aa)) enclose the NiRAN domain. The Nsp12 Interface domain occupies 4205-4303 (KSYDLLKYDY…MNQDNTMSFS (99 aa)). Residues H4234, C4240, C4245, C4249, and C4426 each contribute to the Zn(2+) site. The region spanning 4304-4870 (KMGLSQLMQF…NMYRAPTTLQ (567 aa)) is the Nsp12 RNA-dependent RNA polymerase domain. Residues 4306-4519 (GLSQLMQFVG…HQKILKSIVN (214 aa)) are rdRp Fingers N-ter. Positions 4520-4558 (TRNAPVVIGTTKFYGGWDNMLRNLIQGVEDPILMGWDYP) are rdRp Palm N-ter. The RdRp catalytic domain maps to 4550 to 4712 (PILMGWDYPK…CYNNTLAKQG (163 aa)). The rdRp Fingers C-ter stretch occupies residues 4559 to 4617 (KCDRAMPNLLRIAASLVLARKHTNCCTWSERVYRLYNECAQVLSETVLATGGIYVKPGG). Positions 4580, 4583, and 4584 each coordinate Zn(2+). The rdRp Palm C-ter stretch occupies residues 4618–4753 (TSSGDATTAY…EKGPHEFCSQ (136 aa)). Residues S4697, D4698, and D4699 contribute to the active site. Residues 4754–4870 (HTMLVEVDGE…NMYRAPTTLQ (117 aa)) form a rdRp Thumb region. A CV ZBD domain is found at 4871–4983 (SCGVCVVCNS…DDFNQLATTN (113 aa)). Residues C4875, C4878, C4886, C4889, C4896, C4899, H4903, H4909, C4920, C4925, C4942, and H4945 each coordinate Zn(2+). In terms of domain architecture, (+)RNA virus helicase ATP-binding spans 5127–5307 (MVPACFVNNI…MVCVKPDIFL (181 aa)). ATP is bound at residue 5152-5159 (GPPGSGKS). A (+)RNA virus helicase C-terminal domain is found at 5308–5479 (AKCYRCPKEI…QGTGLFKICN (172 aa)). An ExoN domain is found at 5541–5755 (MFITRDEAIR…RCLAINNAFC (215 aa)). Catalysis depends on residues D5559, E5561, and E5660. Residues C5676, C5678, C5694, H5697, H5725, C5729, and H5732 each coordinate Zn(2+). Active-site residues include H5736 and D5741. C5747 contributes to the Zn(2+) binding site. In terms of domain architecture, N7-MTase spans 5764 to 5991 (YPHIANEDEV…NLWKSFSALQ (228 aa)). 5799 to 5805 (DIGNPKG) contacts S-adenosyl-L-methionine. Residues 5879 to 5893 (CNGGSLYVNKHAFHT) form a gpppA-binding region. Residues C5917, C5937, C5948, and H5951 each coordinate Zn(2+). Residues 5992–6052 (SIDNIAYNMY…SVAFELYAKR (61 aa)) form the Nsp15 N-terminal oligomerization domain. One can recognise an AV-Nsp11N/CoV-Nsp15M domain in the interval 6053-6168 (NIRTLPNNRI…VYKRVNGAFV (116 aa)). In terms of domain architecture, NendoU spans 6185–6326 (EPRSDVERDF…EDGIIKTCYP (142 aa)). Active-site residues include H6214, H6229, K6269, K6373, D6457, K6501, and E6534. The region spanning 6329 to 6628 (QSAWTCGYNM…NTSFTSDSFV (300 aa)) is the Nidovirus-type SAM-dependent 2'-O-MTase domain.

Belongs to the coronaviruses polyprotein 1ab family. As to quaternary structure, interacts with host PHB and PHB2. In terms of assembly, interacts with papain-like protease and non-structural protein 6. Monomer. Homodimer. Only the homodimer shows catalytic activity. As to quaternary structure, eight copies of nsp7 and eight copies of nsp8 assemble to form a heterohexadecamer dsRNA-encircling ring structure. In terms of assembly, eight copies of nsp7 and eight copies of nsp8 assemble to form a heterohexadecamer dsRNA-encircling ring structure. Interacts with ORF6 protein. Homodimer. As to quaternary structure, homododecamer. Interacts with proofreading exoribonuclease nsp14 and 2'-O-methyltransferase nsp16; these interactions enhance nsp14 and nsp16 enzymatic activities. In terms of assembly, interacts with host DDX1 (via C-terminus). Interacts with non-structural protein 10. Homohexamer. As to quaternary structure, interacts with non-structural protein 10. Requires Mn(2+) as cofactor. Zn(2+) is required as a cofactor. Post-translationally, specific enzymatic cleavages in vivo by its own proteases yield mature proteins. 3C-like proteinase nsp5 liberates nsps 6-16 from the polyprotein. Papain-like and 3C-like proteinases are autocatalytically processed. In terms of processing, N-glycosylated.

The protein localises to the host endoplasmic reticulum membrane. Its subcellular location is the host cytoplasm. It localises to the host perinuclear region. The protein resides in the host endoplasmic reticulum. It is found in the host endoplasmic reticulum-Golgi intermediate compartment. The enzyme catalyses Thiol-dependent hydrolysis of ester, thioester, amide, peptide and isopeptide bonds formed by the C-terminal Gly of ubiquitin (a 76-residue protein attached to proteins as an intracellular targeting signal).. The catalysed reaction is RNA(n) + a ribonucleoside 5'-triphosphate = RNA(n+1) + diphosphate. It carries out the reaction ATP + H2O = ADP + phosphate + H(+). It catalyses the reaction a 5'-end diphospho-ribonucleoside in mRNA + GTP + H(+) = a 5'-end (5'-triphosphoguanosine)-ribonucleoside in mRNA + diphosphate. The enzyme catalyses uridylyl-uridylyl-ribonucleotide-RNA = a 3'-end uridylyl-2',3'-cyclophospho-uridine-RNA + a 5'-end dephospho-ribonucleoside-RNA. The catalysed reaction is a 5'-end (N(7)-methyl 5'-triphosphoguanosine)-ribonucleoside in mRNA + S-adenosyl-L-methionine = a 5'-end (N(7)-methyl 5'-triphosphoguanosine)-(2'-O-methyl-ribonucleoside) in mRNA + S-adenosyl-L-homocysteine + H(+). Its function is as follows. Multifunctional protein involved in the transcription and replication of viral RNAs. Contains the proteinases responsible for the cleavages of the polyprotein. Functionally, may play a role in the modulation of host cell survival signaling pathway by interacting with host PHB and PHB2. Indeed, these two proteins play a role in maintaining the functional integrity of the mitochondria and protecting cells from various stresses. In terms of biological role, responsible for the cleavages located at the N-terminus of the replicase polyprotein. In addition, PL-PRO possesses a deubiquitinating/deISGylating activity and processes both 'Lys-48'- and 'Lys-63'-linked polyubiquitin chains from cellular substrates. Plays a role in host membrane rearrangement that leads to creation of cytoplasmic double-membrane vesicles (DMV) necessary for viral replication. Alone is able to induce paired membranes. Coexpression of nsp3 and nsp4 does not result in the formation of DMVs. Its function is as follows. Responsible for the majority of cleavages as it cleaves the C-terminus of replicase polyprotein at 11 sites. Recognizes substrates containing the core sequence [ILMVF]-Q-|-[SGACN]. Inhibited by the substrate-analog Cbz-Val-Asn-Ser-Thr-Leu-Gln-CMK. Functionally, forms a hexadecamer with nsp8 (8 subunits of each) that may participate in viral replication by acting as a primase. Alternatively, may synthesize substantially longer products than oligonucleotide primers. In terms of biological role, forms a hexadecamer with nsp7 (8 subunits of each) that may participate in viral replication by acting as a primase. Alternatively, may synthesize substantially longer products than oligonucleotide primers. Forms a primer, NSP9-pU, which is utilized by the polymerase for the initiation of RNA chains. Interacts with ribosome signal recognition particle RNA (SRP). Together with NSP8, suppress protein integration into the cell membrane, thereby disrupting host immune defenses. Its function is as follows. Plays a pivotal role in viral transcription by stimulating both nsp14 3'-5' exoribonuclease and nsp16 2'-O-methyltransferase activities. Therefore plays an essential role in viral mRNAs cap methylation. Functionally, RNA-directed RNA polymerase that catalyzes the transcription of viral genomic and subgenomic RNAs. Acts in complex with nsp7 and nsp8 to transcribe both the minus and positive strands of genomic RNA. The kinase-like NiRAN domain of NSP12 attaches one or more nucleotides to the amino terminus of NSP9, forming a covalent RNA-protein intermediate that serves as transcription/replication primer. Subgenomic RNAs (sgRNAs) are formed by discontinuous transcription: The polymerase has the ability to pause at transcription-regulating sequences (TRS) and jump to the leader TRS, resulting in a major deletion. This creates a series of subgenomic RNAs that are replicated, transcribed and translated. In addition, Nsp12 is a subunit of the viral RNA capping enzyme that catalyzes the RNA guanylyltransferase reaction for genomic and sub-genomic RNAs. Subsequently, the NiRAN domain transfers RNA to GDP, and forms the core cap structure GpppA-RNA. In terms of biological role, multi-functional protein with a zinc-binding domain in N-terminus displaying RNA and DNA duplex-unwinding activities with 5' to 3' polarity. Activity of helicase is dependent on magnesium. Enzyme possessing two different activities: an exoribonuclease activity acting on both ssRNA and dsRNA in a 3' to 5' direction and a N7-guanine methyltransferase activity. Acts as a proofreading exoribonuclease for RNA replication, thereby lowering The sensitivity of the virus to RNA mutagens. Its function is as follows. Plays a role in viral transcription/replication and prevents the simultaneous activation of host cell dsRNA sensors, such as MDA5/IFIH1, OAS, and PKR. Acts by degrading the 5'-polyuridines generated during replication of the poly(A) region of viral genomic and subgenomic RNAs. Catalyzes a two-step reaction in which a 2'3'-cyclic phosphate (2'3'-cP) is first generated by 2'-O transesterification, which is then hydrolyzed to a 3'-phosphate (3'-P). If not degraded, poly(U) RNA would hybridize with poly(A) RNA tails and activate host dsRNA sensors. Functionally, methyltransferase that mediates mRNA cap 2'-O-ribose methylation to the 5'-cap structure of viral mRNAs. N7-methyl guanosine cap is a prerequisite for binding of nsp16. Therefore plays an essential role in viral mRNAs cap methylation which is essential to evade immune system. This Gallus gallus (Chicken) protein is Replicase polyprotein 1ab (rep).